Consider the following 118-residue polypeptide: Large ribosomal subunit protein uL22 (118 aa).

Belongs to the universal ribosomal protein uL22 family. In terms of assembly, part of the 50S ribosomal subunit.

In terms of biological role, this protein binds specifically to 23S rRNA; its binding is stimulated by other ribosomal proteins, e.g. L4, L17, and L20. It is important during the early stages of 50S assembly. It makes multiple contacts with different domains of the 23S rRNA in the assembled 50S subunit and ribosome. Its function is as follows. The globular domain of the protein is located near the polypeptide exit tunnel on the outside of the subunit, while an extended beta-hairpin is found that lines the wall of the exit tunnel in the center of the 70S ribosome. This chain is Large ribosomal subunit protein uL22, found in Chlorobium limicola (strain DSM 245 / NBRC 103803 / 6330).